A 319-amino-acid polypeptide reads, in one-letter code: Acetyl-coenzyme A carboxylase carboxyl transferase subunit alpha (319 aa).

The 262-residue stretch at 35-296 folds into the CoA carboxyltransferase C-terminal domain; it reads NIDEEVHRLR…KAQLLADLAD (262 aa).

The protein belongs to the AccA family. As to quaternary structure, acetyl-CoA carboxylase is a heterohexamer composed of biotin carboxyl carrier protein (AccB), biotin carboxylase (AccC) and two subunits each of ACCase subunit alpha (AccA) and ACCase subunit beta (AccD).

It localises to the cytoplasm. The enzyme catalyses N(6)-carboxybiotinyl-L-lysyl-[protein] + acetyl-CoA = N(6)-biotinyl-L-lysyl-[protein] + malonyl-CoA. The protein operates within lipid metabolism; malonyl-CoA biosynthesis; malonyl-CoA from acetyl-CoA: step 1/1. Its function is as follows. Component of the acetyl coenzyme A carboxylase (ACC) complex. First, biotin carboxylase catalyzes the carboxylation of biotin on its carrier protein (BCCP) and then the CO(2) group is transferred by the carboxyltransferase to acetyl-CoA to form malonyl-CoA. The chain is Acetyl-coenzyme A carboxylase carboxyl transferase subunit alpha from Shigella sonnei (strain Ss046).